We begin with the raw amino-acid sequence, 214 residues long: Ribosomal protein uL16-like (214 aa).

It belongs to the universal ribosomal protein uL16 family. As to quaternary structure, component of a male germ cell-specific 60S large ribosomal subunit (LSU), which contains RPL10L and RPL39L, instead of RPL10 and RPL39 paralogs. The composition of the rest of the complex is similar to classical ribosomes. As to expression, almost testis-specific. Also expressed in pre- and postmenopausal ovary.

It localises to the cytoplasm. Functionally, testis-specific component of the ribosome, which is required for the transition from prophase to metaphase in male meiosis I. Compensates for the inactivated X-linked RPL10 paralog during spermatogenesis. The ribosome is a large ribonucleoprotein complex responsible for the synthesis of proteins in the cell. The male germ cell-specific ribosome displays a ribosomal polypeptide exit tunnel of distinct size and charge states compared with the classical ribosome. It is responsible for regulating the biosynthesis and folding of a subset of male germ-cell-specific proteins that are essential for the formation of sperm. The sequence is that of Ribosomal protein uL16-like from Homo sapiens (Human).